Reading from the N-terminus, the 177-residue chain is Alpha-crystallin A chain (177 aa).

Residue methionine 1 is modified to N-acetylmethionine. In terms of domain architecture, sHSP spans 52-162; sequence VFRNFLDSGI…NWQDRPIPVS (111 aa). Zn(2+) is bound by residues histidine 100 and glutamate 102. A disulfide bridge links cysteine 131 with cysteine 142. Residues 146-177 are disordered; sequence TRPGDDSNWQDRPIPVSREEKQGTQPEIRADP. O-linked (GlcNAc) serine glycosylation is present at serine 162. A compositionally biased stretch (basic and acidic residues) spans 162 to 177; that stretch reads SREEKQGTQPEIRADP.

It belongs to the small heat shock protein (HSP20) family. As to quaternary structure, heteropolymer composed of three CRYAA and one CRYAB subunits. Inter-subunit bridging via zinc ions enhances stability, which is crucial as there is no protein turn over in the lens. Can also form homodimers and homotetramers (dimers of dimers) which serve as the building blocks of homooligomers.

Its subcellular location is the cytoplasm. It localises to the nucleus. In terms of biological role, contributes to the transparency and refractive index of the lens. May act as a chaperone, preventing aggregation of various proteins under a wide range of stress conditions. The protein is Alpha-crystallin A chain (cryaa) of Squalus acanthias (Spiny dogfish).